A 309-amino-acid chain; its full sequence is UDP-N-acetylenolpyruvoylglucosamine reductase (309 aa).

Residues 34-221 form the FAD-binding PCMH-type domain; the sequence is RVGGPAQVLF…TAAREAAQPI (188 aa). R179 is an active-site residue. Catalysis depends on S228, which acts as the Proton donor. E298 is an active-site residue.

It belongs to the MurB family. It depends on FAD as a cofactor.

It localises to the cytoplasm. It catalyses the reaction UDP-N-acetyl-alpha-D-muramate + NADP(+) = UDP-N-acetyl-3-O-(1-carboxyvinyl)-alpha-D-glucosamine + NADPH + H(+). It functions in the pathway cell wall biogenesis; peptidoglycan biosynthesis. Functionally, cell wall formation. This is UDP-N-acetylenolpyruvoylglucosamine reductase from Methylorubrum extorquens (strain CM4 / NCIMB 13688) (Methylobacterium extorquens).